The primary structure comprises 383 residues: tRNA (guanine(26)-N(2))-dimethyltransferase (383 aa).

The region spanning 4-371 (EIITEGRTPL…ASPEEFEAVL (368 aa)) is the Trm1 methyltransferase domain. S-adenosyl-L-methionine is bound by residues arginine 38, arginine 63, aspartate 80, aspartate 108, and alanine 109. The Zn(2+) site is built by cysteine 243, cysteine 246, cysteine 258, and cysteine 261.

This sequence belongs to the class I-like SAM-binding methyltransferase superfamily. Trm1 family.

The catalysed reaction is guanosine(26) in tRNA + 2 S-adenosyl-L-methionine = N(2)-dimethylguanosine(26) in tRNA + 2 S-adenosyl-L-homocysteine + 2 H(+). Its function is as follows. Dimethylates a single guanine residue at position 26 of a number of tRNAs using S-adenosyl-L-methionine as donor of the methyl groups. The chain is tRNA (guanine(26)-N(2))-dimethyltransferase from Methanopyrus kandleri (strain AV19 / DSM 6324 / JCM 9639 / NBRC 100938).